Here is a 487-residue protein sequence, read N- to C-terminus: Inosine-5'-monophosphate dehydrogenase (487 aa).

CBS domains are found at residues 93-152 (VVTE…VTAV) and 153-214 (MTPK…CKDE). Residues Asp248, 248–250 (DSS), and 298–300 (GIG) contribute to the NAD(+) site. K(+) contacts are provided by Gly300 and Gly302. Residue Ser303 participates in IMP binding. Cys305 provides a ligand contact to K(+). Cys305 functions as the Thioimidate intermediate in the catalytic mechanism. IMP-binding positions include 338 to 340 (DGG), 361 to 362 (GS), and 385 to 389 (YRGMG). The active-site Proton acceptor is the Arg401. Glu415 is an IMP binding site. Glu469, Ser470, and His471 together coordinate K(+).

The protein belongs to the IMPDH/GMPR family. In terms of assembly, homotetramer. K(+) serves as cofactor.

It catalyses the reaction IMP + NAD(+) + H2O = XMP + NADH + H(+). The protein operates within purine metabolism; XMP biosynthesis via de novo pathway; XMP from IMP: step 1/1. Its activity is regulated as follows. Mycophenolic acid (MPA) is a non-competitive inhibitor that prevents formation of the closed enzyme conformation by binding to the same site as the amobile flap. In contrast, mizoribine monophosphate (MZP) is a competitive inhibitor that induces the closed conformation. MPA is a potent inhibitor of mammalian IMPDHs but a poor inhibitor of the bacterial enzymes. MZP is a more potent inhibitor of bacterial IMPDH. Functionally, catalyzes the conversion of inosine 5'-phosphate (IMP) to xanthosine 5'-phosphate (XMP), the first committed and rate-limiting step in the de novo synthesis of guanine nucleotides, and therefore plays an important role in the regulation of cell growth. The polypeptide is Inosine-5'-monophosphate dehydrogenase (Yersinia pestis).